The sequence spans 527 residues: Peptide chain release factor 3 (527 aa).

The region spanning 9-277 (AKRRTFAIIS…AVVDWAPRPL (269 aa)) is the tr-type G domain. GTP is bound by residues 18–25 (SHPDAGKT), 86–90 (DTPGH), and 140–143 (NKLD).

It belongs to the TRAFAC class translation factor GTPase superfamily. Classic translation factor GTPase family. PrfC subfamily.

It localises to the cytoplasm. Functionally, increases the formation of ribosomal termination complexes and stimulates activities of RF-1 and RF-2. It binds guanine nucleotides and has strong preference for UGA stop codons. It may interact directly with the ribosome. The stimulation of RF-1 and RF-2 is significantly reduced by GTP and GDP, but not by GMP. The sequence is that of Peptide chain release factor 3 from Pseudomonas putida (strain W619).